A 366-amino-acid polypeptide reads, in one-letter code: G kinase-anchoring protein 1 (366 aa).

The segment at 1-95 (MASAVLSSVP…SHAVCNAQHD (95 aa)) is interaction with IRS1. Disordered regions lie at residues 20 to 110 (QVDS…REEN) and 147 to 177 (EYED…DRPL). Ser23, Ser25, and Ser27 each carry phosphoserine. Polar residues predominate over residues 39–50 (TGKSQTLGSKST). Residues 47–77 (SKSTTNEKKREKRRKKKEQQQSEANELRNLA) are a coiled coil. Ser106 carries the phosphoserine; by PKG modification. Coiled-coil stretches lie at residues 128–160 (ADLE…QSKV) and 243–353 (EHNQ…YQGG).

It belongs to the GKAP1 family. As to quaternary structure, interacts with PRKG1 and IRS1.

Its subcellular location is the golgi apparatus. Its function is as follows. Regulates insulin-dependent IRS1 tyrosine phosphorylation in adipocytes by modulating the availability of IRS1 to IR tyrosine kinase. Its association with IRS1 is required for insulin-induced translocation of SLC2A4 to the cell membrane. Involved in TNF-induced impairment of insulin-dependent IRS1 tyrosine phosphorylation. The chain is G kinase-anchoring protein 1 (GKAP1) from Homo sapiens (Human).